A 178-amino-acid chain; its full sequence is ATP-dependent protease subunit HslV (178 aa).

Thr-7 is a catalytic residue. Residues Gly-162, Cys-165, and Thr-168 each contribute to the Na(+) site.

It belongs to the peptidase T1B family. HslV subfamily. As to quaternary structure, a double ring-shaped homohexamer of HslV is capped on each side by a ring-shaped HslU homohexamer. The assembly of the HslU/HslV complex is dependent on binding of ATP.

It localises to the cytoplasm. It catalyses the reaction ATP-dependent cleavage of peptide bonds with broad specificity.. With respect to regulation, allosterically activated by HslU binding. Its function is as follows. Protease subunit of a proteasome-like degradation complex believed to be a general protein degrading machinery. This is ATP-dependent protease subunit HslV from Herminiimonas arsenicoxydans.